We begin with the raw amino-acid sequence, 320 residues long: Epoxidase atD (320 aa).

N245 and N299 each carry an N-linked (GlcNAc...) asparagine glycan.

It functions in the pathway secondary metabolite biosynthesis. Its function is as follows. Epoxidase; part of the gene cluster that mediates the biosynthesis of terreic acid, a quinone epoxide inhibitor of Bruton's tyrosine kinase. The first step of the pathway is the synthesis of 6-methylsalicylic acid (6-MSA) by the 6-methylsalicylic acid synthase atX. In the biosynthesis of 6-MSA, atX utilizes one acetyl-CoA and three malonyl-CoAs as its substrates and catalyzes a series of programmed reactions including Claisen condensation, reduction, aldol cyclization, and the hydrolytic cleavage that yields 6-MSA. The 6-methylsalicylate 1-monooxygenase atA then catalyzes the decarboxylative hydroxylation of 6-MSA to 3-methylcatechol. The next step is the conversion of 3-methylcatechol to 3-methyl-1,2,4-benzenetriol by cytochrome P450 monooxygenase atE, which is enhanced by cytochrome P450 monooxygenase atG. Then, the epoxidase atD catalyzes the epoxidation and hydroxyl oxidation of 3-methyl-1,2,4-benzenetriol to terremutin. Lastly, GMC oxidoreductase atC oxidizes terremutin to terreic acid. In Aspergillus terreus (strain NIH 2624 / FGSC A1156), this protein is Epoxidase atD.